The primary structure comprises 172 residues: MDRTQKEATVAALNSSLQEAGLIIVTKQSGMTVAEVTDLRRKMRAAGCSFKVTKNRLARIALKGTQFETLDGFFKGPTAIAYSKDPVAAAKVAVDYAKTNDKFQIVGGGLPGLKLDSQGVDALSKLPSLNELRASLLGMIQTPATRIAGVLQAPGGQVARVLAAYAKKDEAA.

It belongs to the universal ribosomal protein uL10 family. In terms of assembly, part of the ribosomal stalk of the 50S ribosomal subunit. The N-terminus interacts with L11 and the large rRNA to form the base of the stalk. The C-terminus forms an elongated spine to which L12 dimers bind in a sequential fashion forming a multimeric L10(L12)X complex.

Its function is as follows. Forms part of the ribosomal stalk, playing a central role in the interaction of the ribosome with GTP-bound translation factors. In Rhodospirillum centenum (strain ATCC 51521 / SW), this protein is Large ribosomal subunit protein uL10.